A 398-amino-acid chain; its full sequence is UDP-D-apiose/UDP-D-xylose synthase (398 aa).

57 to 88 (DVYCDKIRHLVDPAPPHLHGRISFHRLNIKND) is a binding site for NAD(+). Residue arginine 190 coordinates substrate. Residue tyrosine 193 is the Proton acceptor of the active site. Residue 193-197 (YACAK) coordinates NAD(+). Position 222 (asparagine 222) interacts with substrate. Residue arginine 243 coordinates NAD(+). Residues 244 to 248 (VLACF), 261 to 268 (VDGGQSQR), and 345 to 349 (DSDKR) contribute to the substrate site.

This sequence belongs to the NAD(P)-dependent epimerase/dehydratase family. As to quaternary structure, homodimer. NAD(+) serves as cofactor.

It localises to the cytoplasm. In terms of biological role, catalyzes the conversion of UDP-D-glucuronate to a mixture of UDP-D-apiose and UDP-D-xylose. D-Apiose (3-C-hydroxymethyl-d-erythrose) is the only plant cell wall monosaccharide with a branched carbon skeleton and found in rhamnogalacturonan II (RG-II), apiogalacturonan, and several apioglycosides. The protein is UDP-D-apiose/UDP-D-xylose synthase of Oryza sativa subsp. japonica (Rice).